The chain runs to 422 residues: Synaptotagmin-1 (422 aa).

The Vesicular segment spans residues 1 to 57 (MVSESHHEALAAPPVTTVATVLPHNATEPASPGEGKEDAFSKLKEKFMNELHKIPLP). Asn25 is a glycosylation site (N-linked (GlcNAc...) asparagine). Residues 58–80 (PWALIAIAIVAVLLVLTCCFCIC) traverse the membrane as a helical segment. S-palmitoyl cysteine attachment occurs at residues Cys75, Cys76, Cys78, Cys80, and Cys83. The Cytoplasmic portion of the chain corresponds to 81 to 422 (KKCLFKKKNK…EVDAMLAVKK (342 aa)). Residues 113–142 (TMKDQALKDDDAETGLTDGEEKEEPKEEEK) form a disordered region. The span at 122–134 (DDAETGLTDGEEK) shows a compositional bias: acidic residues. Position 129 is a phosphothreonine (Thr129). The interval 136-382 (EPKEEEKLGK…AIGKVFVGYN (247 aa)) is phospholipid binding. Positions 142–261 (KLGKLQYSLD…DFGHVTEEWR (120 aa)) constitute a C2 1 domain. 3 residues coordinate Ca(2+): Leu172, Asp173, and Asp179. Tyr230 is modified (phosphotyrosine). Residues Asp231, Phe232, Asp233, Ser236, Lys237, and Asp239 each coordinate Ca(2+). The residue at position 265 (Ser265) is a Phosphoserine. The C2 2 domain maps to 273 to 406 (KLGDICFSLR…NPRRPIAQWH (134 aa)). Residues Asp304 and Asp310 each coordinate Ca(2+). Residues Ser343 and Ser345 each carry the phosphoserine modification. Asp364, Asp366, and Asp372 together coordinate Ca(2+).

This sequence belongs to the synaptotagmin family. Homotetramer. Heterodimer; heterodimerizes with SYT2 in presence of calcium. Interacts with SCAMP5. Interacts with STON2. Forms a complex with SV2B, syntaxin 1 and SNAP25. Interacts with SV2A, SV2B and SV2C. Interacts with RIMS1. Interacts with PRRT2. Interacts with DNAJC5 in a phosphorylation-dependent manner. Interacts (via N-terminus) with RAB3A. Interacts with SYT12. Interacts with calmodulin. Interacts with DNM1 (via C-terminal proline-rich domain (PRD)); this interaction facilitates vesicle fission during clathrin-mediated endocytosis (CME). The cofactor is Ca(2+). In terms of processing, glycosylated.

It localises to the cytoplasmic vesicle. Its subcellular location is the secretory vesicle membrane. The protein localises to the secretory vesicle. It is found in the synaptic vesicle membrane. The protein resides in the chromaffin granule membrane. It localises to the cytoplasm. Functionally, calcium sensor that participates in triggering neurotransmitter release at the synapse. May have a regulatory role in the membrane interactions during trafficking of synaptic vesicles at the active zone of the synapse. It binds acidic phospholipids with a specificity that requires the presence of both an acidic head group and a diacyl backbone. A Ca(2+)-dependent interaction between synaptotagmin and putative receptors for activated protein kinase C has also been reported. It can bind to at least three additional proteins in a Ca(2+)-independent manner; these are neurexins, syntaxin and AP2. Plays a role in dendrite formation by melanocytes. This Bos taurus (Bovine) protein is Synaptotagmin-1.